A 490-amino-acid polypeptide reads, in one-letter code: Betaine aldehyde dehydrogenase (490 aa).

Positions 26, 27, and 93 each coordinate K(+). NAD(+) is bound at residue 150–152 (GAW). The Charge relay system role is filled by K162. 176-179 (KPSE) lines the NAD(+) pocket. Position 180 (V180) interacts with K(+). 230 to 233 (GVAS) is an NAD(+) binding site. K(+) is bound at residue L246. E252 acts as the Proton acceptor in catalysis. 3 residues coordinate NAD(+): G254, C286, and E387. The active-site Nucleophile is C286. C286 carries the post-translational modification Cysteine sulfenic acid (-SOH). K(+) is bound by residues K457 and G460. The active-site Charge relay system is the E464.

It belongs to the aldehyde dehydrogenase family. In terms of assembly, dimer of dimers. K(+) serves as cofactor.

The catalysed reaction is betaine aldehyde + NAD(+) + H2O = glycine betaine + NADH + 2 H(+). The protein operates within amine and polyamine biosynthesis; betaine biosynthesis via choline pathway; betaine from betaine aldehyde: step 1/1. Involved in the biosynthesis of the osmoprotectant glycine betaine. Catalyzes the irreversible oxidation of betaine aldehyde to the corresponding acid. The sequence is that of Betaine aldehyde dehydrogenase from Escherichia coli O7:K1 (strain IAI39 / ExPEC).